The primary structure comprises 401 residues: Imidazolonepropionase (401 aa).

Fe(3+)-binding residues include His70 and His72. Zn(2+)-binding residues include His70 and His72. Arg79, Tyr142, and His175 together coordinate 4-imidazolone-5-propanoate. Tyr142 lines the N-formimidoyl-L-glutamate pocket. His238 provides a ligand contact to Fe(3+). His238 contacts Zn(2+). Gln241 lines the 4-imidazolone-5-propanoate pocket. Position 313 (Asp313) interacts with Fe(3+). Asp313 provides a ligand contact to Zn(2+). The N-formimidoyl-L-glutamate site is built by Asn315 and Gly317. Residue Thr318 coordinates 4-imidazolone-5-propanoate.

The protein belongs to the metallo-dependent hydrolases superfamily. HutI family. Zn(2+) serves as cofactor. Requires Fe(3+) as cofactor.

Its subcellular location is the cytoplasm. The enzyme catalyses 4-imidazolone-5-propanoate + H2O = N-formimidoyl-L-glutamate. It functions in the pathway amino-acid degradation; L-histidine degradation into L-glutamate; N-formimidoyl-L-glutamate from L-histidine: step 3/3. Functionally, catalyzes the hydrolytic cleavage of the carbon-nitrogen bond in imidazolone-5-propanoate to yield N-formimidoyl-L-glutamate. It is the third step in the universal histidine degradation pathway. This is Imidazolonepropionase from Xanthomonas axonopodis pv. citri (strain 306).